A 160-amino-acid polypeptide reads, in one-letter code: Cytochrome b6-f complex subunit 4 (160 aa).

3 helical membrane passes run L36 to V56, L95 to E115, and T131 to I151.

This sequence belongs to the cytochrome b family. PetD subfamily. As to quaternary structure, the 4 large subunits of the cytochrome b6-f complex are cytochrome b6, subunit IV (17 kDa polypeptide, petD), cytochrome f and the Rieske protein, while the 4 small subunits are petG, petL, petM and petN. The complex functions as a dimer.

It localises to the plastid. The protein localises to the chloroplast thylakoid membrane. Component of the cytochrome b6-f complex, which mediates electron transfer between photosystem II (PSII) and photosystem I (PSI), cyclic electron flow around PSI, and state transitions. The polypeptide is Cytochrome b6-f complex subunit 4 (Tetradesmus obliquus (Green alga)).